A 469-amino-acid polypeptide reads, in one-letter code: 3-isopropylmalate dehydratase large subunit (469 aa).

Residues Cys349, Cys409, and Cys412 each contribute to the [4Fe-4S] cluster site.

The protein belongs to the aconitase/IPM isomerase family. LeuC type 1 subfamily. Heterodimer of LeuC and LeuD. [4Fe-4S] cluster serves as cofactor.

The enzyme catalyses (2R,3S)-3-isopropylmalate = (2S)-2-isopropylmalate. Its pathway is amino-acid biosynthesis; L-leucine biosynthesis; L-leucine from 3-methyl-2-oxobutanoate: step 2/4. Catalyzes the isomerization between 2-isopropylmalate and 3-isopropylmalate, via the formation of 2-isopropylmaleate. This Methylorubrum extorquens (strain CM4 / NCIMB 13688) (Methylobacterium extorquens) protein is 3-isopropylmalate dehydratase large subunit.